The following is a 315-amino-acid chain: Malate dehydrogenase (315 aa).

NAD(+)-binding positions include 11–16 and aspartate 35; that span reads GAGHVG. Arginine 84 and arginine 90 together coordinate substrate. Residues asparagine 97 and 120-122 each bind NAD(+); that span reads VTN. Residues asparagine 122 and arginine 153 each coordinate substrate. The Proton acceptor role is filled by histidine 177.

The protein belongs to the LDH/MDH superfamily. MDH type 3 family.

The enzyme catalyses (S)-malate + NAD(+) = oxaloacetate + NADH + H(+). Its function is as follows. Catalyzes the reversible oxidation of malate to oxaloacetate. The protein is Malate dehydrogenase of Thermosulfidibacter takaii (strain DSM 17441 / JCM 13301 / NBRC 103674 / ABI70S6).